We begin with the raw amino-acid sequence, 1260 residues long: Ankyrin repeat and sterile alpha motif domain-containing protein 1B (1260 aa).

7 ANK repeats span residues 2 to 31 (GKDQELLEAARTGNVALVEKLLSGRKGGIL), 58 to 87 (SGYTALHHAALNGHKDIVLKLLQFEASTNV), 91 to 120 (KGYFPIHLAAWKGDVEIVKILIHHGPSHSR), 127 to 156 (ENETALHCAAQYGHSEVVAVLLEELTDPTI), 160 to 189 (KLETPLDLAALYGRLRVVKMIISAHPNLMS), 193 to 222 (RKHTPLHLAARNGHKAVVQVLLEAGMDVSC), and 225 to 254 (EKGSALHEAALFGKVDVVRVLLETGIDANI). The interval 298–326 (HAQEDTAQETRLSSPAQSPSQKTKSETVT) is disordered. Polar residues predominate over residues 306-326 (ETRLSSPAQSPSQKTKSETVT). Ser-310, Ser-311, Ser-315, Ser-354, and Ser-365 each carry phosphoserine. Disordered stretches follow at residues 368 to 402 (ELGKNGSQSVRTSSTINLSPGEVEDEEEDPNSCGP), 491 to 513 (PGTGHHRNSSTGPTPDCSPPSPD), and 556 to 642 (GCTS…EASL). Positions 372–385 (NGSQSVRTSSTINL) are enriched in polar residues. Phosphothreonine is present on Thr-504. Ser-508 and Ser-511 each carry phosphoserine. The segment covering 556 to 575 (GCTSFTSSPPVSPPTSSVET) has biased composition (low complexity). Residues 576–588 (TEIKNEGAEHTDD) are compositionally biased toward basic and acidic residues. Residue Ser-739 is modified to Phosphoserine. Residues 754 to 778 (VNWSKSSTAERSSKDNSERTPSFTS) form a disordered region. Thr-773 is subject to Phosphothreonine. Phosphoserine is present on Ser-775. 2 SAM domains span residues 810 to 876 (CPVQ…LPKM) and 884 to 949 (YHPT…RLHE). Position 901 is a phosphotyrosine (Tyr-901). The short motif at 935–938 (HRKR) is the Nuclear localization signal element. Positions 946 to 989 (RLHEDPPQKPPRSITLREPSGNHTPPQLSPSLSQSTYTTGGSLD) are disordered. The segment covering 969–984 (TPPQLSPSLSQSTYTT) has biased composition (low complexity). Ser-974 bears the Phosphoserine mark. Phosphotyrosine is present on Tyr-1007. Positions 1056–1213 (IFQSCDYKAF…SFENKPSKPI (158 aa)) constitute a PID domain. Positions 1197 to 1217 (HSSTLPESFENKPSKPIPKPR) are disordered.

Interacts with EPHA8. Isoform 2 interacts with COIL. Isoform 3 interacts with DLG4. Post-translationally, nuclear translocation of isoform 3 requires an NMDAR-dependent proteolytic cleavage. A 35 kDa N-terminal form shuttles to the nucleus. Isoform 3 is brain specific and highly enriched in the postsynaptic densities (PSDs), especially in cortical, striatal and hippocampal PSDs.

It localises to the cytoplasm. The protein localises to the nucleus. The protein resides in the postsynaptic density. Its subcellular location is the cell projection. It is found in the dendritic spine. It localises to the cajal body. Functionally, isoform 2 may participate in the regulation of nucleoplasmic coilin protein interactions in neuronal and transformed cells. Its function is as follows. Isoform 3 can regulate global protein synthesis by altering nucleolar numbers. The sequence is that of Ankyrin repeat and sterile alpha motif domain-containing protein 1B (Anks1b) from Rattus norvegicus (Rat).